A 501-amino-acid chain; its full sequence is Protein translocase subunit SecD (501 aa).

6 helical membrane passes run 9–29, 339–359, 371–391, 394–414, 447–467, and 470–490; these read NLWL…YAVV, AIEQ…VVLI, ISIF…GATL, PGIA…VLIF, VTLL…VKGF, and TLAL…KVFL.

This sequence belongs to the SecD/SecF family. SecD subfamily. In terms of assembly, forms a complex with SecF. Part of the essential Sec protein translocation apparatus which comprises SecA, SecYEG and auxiliary proteins SecDF. Other proteins may also be involved.

The protein resides in the cell inner membrane. Its function is as follows. Part of the Sec protein translocase complex. Interacts with the SecYEG preprotein conducting channel. SecDF uses the proton motive force (PMF) to complete protein translocation after the ATP-dependent function of SecA. The chain is Protein translocase subunit SecD from Aquifex aeolicus (strain VF5).